Here is a 663-residue protein sequence, read N- to C-terminus: MKKYDLSTNEISDNLRYLELLSKQYPTINEASTEIINLQAILNLPKGTEHFLTDIHGEYEPFIHVLKNASGVIKRKIEDLFGNSLMQSEKKSLATLIYYPEQKLEIVLKQEENIDDWYKINLYRLIEICRYVSSKYTRSKVRKALPKDFTYIIEELLHEQPKGIDKYEYYEQIIRTIIDTDRSKEFIVALSKLIQRLVIDRLHILGDIFDRGPGADIIMDTLVEYHSVDIQWGNHDILWMGAACGSDVCIANVIKNSLKYANLDTLENGYGINLLPLATFSMDFYKDHPCNIFLPKMDCDKKYSINEINLIAQMHKAIAIILFKLEGQVILRHPEFNMNHRLLLNKINYAEGTINLNGKTHKLKDSFFPTIDPKNPYELTYDEKELIDKLKTSFINSDKYNKHVRFLYSNGSLYLKFNSNLLYHGFIPLNEDGSFKKVKIADKEYKGKELLDKLDMLAREAYFSKDKDDSDNKKDIMWYLWCGASSPLFGKDRMTIFEQYFIEEKETHYEKKDPYFSLRDNEDICKKILKEFGLSSPESHIINGHMPVEEKNGESPIKANGTLLVIDGGFSKAYQPKTGLAGYTLIYNSFGLQLVSHQPFESTEAAIKEETDILSTTLLLEQVVNRKRVEDTDVGVTLKQQIDDLKMLLNAYRKGLIKQQNKI.

Belongs to the FBPase class 3 family. The cofactor is Mn(2+).

The enzyme catalyses beta-D-fructose 1,6-bisphosphate + H2O = beta-D-fructose 6-phosphate + phosphate. The protein operates within carbohydrate biosynthesis; gluconeogenesis. In Clostridium beijerinckii (strain ATCC 51743 / NCIMB 8052) (Clostridium acetobutylicum), this protein is Fructose-1,6-bisphosphatase class 3 1.